Consider the following 299-residue polypeptide: NmrA-like family domain-containing protein 1 (299 aa).

Residues 11-16 (GGTGAQ), 37-41 (RNPRK), 58-59 (DQ), Q62, 79-81 (TNY), K92, K133, and 155-158 (YFEN) contribute to the NADP(+) site. The tract at residues 153–189 (PCYFENLLSHFLPQKAPDGKSYLLSLPTGDVPMDGMS) is interaction with ASS1.

It belongs to the NmrA-type oxidoreductase family. Homodimer. Interacts with ASS1. Interaction is enhanced by low NADPH/NADP(+) ratios, which results in inhibition of ASS1 activity.

Its subcellular location is the cytoplasm. The protein localises to the perinuclear region. It is found in the nucleus. Redox sensor protein. Undergoes restructuring and subcellular redistribution in response to changes in intracellular NADPH/NADP(+) levels. At low NADPH concentrations the protein is found mainly as a monomer, and binds argininosuccinate synthase (ASS1), the enzyme involved in nitric oxide synthesis. Association with ASS1 impairs its activity and reduces the production of nitric oxide, which subsecuently prevents apoptosis. Under normal NADPH concentrations, the protein is found as a dimer and hides the binding site for ASS1. The homodimer binds one molecule of NADPH. Has higher affinity for NADPH than for NADP(+). Binding to NADPH is necessary to form a stable dimer. The sequence is that of NmrA-like family domain-containing protein 1 (NMRAL1) from Homo sapiens (Human).